The chain runs to 314 residues: Lipoyl synthase (314 aa).

Positions 60, 65, 71, 86, 90, 93, and 300 each coordinate [4Fe-4S] cluster. Positions 72–289 constitute a Radical SAM core domain; sequence FRKGTATFMI…RQFGLSIGFS (218 aa).

Belongs to the radical SAM superfamily. Lipoyl synthase family. [4Fe-4S] cluster is required as a cofactor.

It localises to the cytoplasm. It carries out the reaction [[Fe-S] cluster scaffold protein carrying a second [4Fe-4S](2+) cluster] + N(6)-octanoyl-L-lysyl-[protein] + 2 oxidized [2Fe-2S]-[ferredoxin] + 2 S-adenosyl-L-methionine + 4 H(+) = [[Fe-S] cluster scaffold protein] + N(6)-[(R)-dihydrolipoyl]-L-lysyl-[protein] + 4 Fe(3+) + 2 hydrogen sulfide + 2 5'-deoxyadenosine + 2 L-methionine + 2 reduced [2Fe-2S]-[ferredoxin]. Its pathway is protein modification; protein lipoylation via endogenous pathway; protein N(6)-(lipoyl)lysine from octanoyl-[acyl-carrier-protein]: step 2/2. Catalyzes the radical-mediated insertion of two sulfur atoms into the C-6 and C-8 positions of the octanoyl moiety bound to the lipoyl domains of lipoate-dependent enzymes, thereby converting the octanoylated domains into lipoylated derivatives. This chain is Lipoyl synthase, found in Pelobacter propionicus (strain DSM 2379 / NBRC 103807 / OttBd1).